A 587-amino-acid chain; its full sequence is Proteasome-associated ATPase (587 aa).

Residues 9-94 are a coiled coil; that stretch reads ARKAQHDAEI…KEEVDRLAQP (86 aa). Residue 276–281 participates in ATP binding; sequence GCGKTL. Residues 586 to 587 are docks into pockets in the proteasome alpha-ring; that stretch reads YL.

It belongs to the AAA ATPase family. In terms of assembly, homohexamer. Assembles into a hexameric ring structure that caps the 20S proteasome core. Strongly interacts with the prokaryotic ubiquitin-like protein Pup through a hydrophobic interface; the interacting region of ARC lies in its N-terminal coiled-coil domain. There is one Pup binding site per ARC hexamer ring. Upon ATP-binding, the C-terminus of ARC interacts with the alpha-rings of the proteasome core, possibly by binding to the intersubunit pockets.

It participates in protein degradation; proteasomal Pup-dependent pathway. In terms of biological role, ATPase which is responsible for recognizing, binding, unfolding and translocation of pupylated proteins into the bacterial 20S proteasome core particle. May be essential for opening the gate of the 20S proteasome via an interaction with its C-terminus, thereby allowing substrate entry and access to the site of proteolysis. Thus, the C-termini of the proteasomal ATPase may function like a 'key in a lock' to induce gate opening and therefore regulate proteolysis. The protein is Proteasome-associated ATPase of Thermomonospora curvata (strain ATCC 19995 / DSM 43183 / JCM 3096 / KCTC 9072 / NBRC 15933 / NCIMB 10081 / Henssen B9).